A 501-amino-acid polypeptide reads, in one-letter code: Lysine--tRNA ligase (501 aa).

Mg(2+) is bound by residues Glu-411 and Glu-418.

The protein belongs to the class-II aminoacyl-tRNA synthetase family. As to quaternary structure, homodimer. It depends on Mg(2+) as a cofactor.

The protein resides in the cytoplasm. The enzyme catalyses tRNA(Lys) + L-lysine + ATP = L-lysyl-tRNA(Lys) + AMP + diphosphate. In Thiobacillus denitrificans (strain ATCC 25259 / T1), this protein is Lysine--tRNA ligase.